The following is a 157-amino-acid chain: Crossover junction endodeoxyribonuclease RuvC (157 aa).

Catalysis depends on residues Asp-7, Glu-66, and Asp-139. Mg(2+) contacts are provided by Asp-7, Glu-66, and Asp-139.

This sequence belongs to the RuvC family. As to quaternary structure, homodimer which binds Holliday junction (HJ) DNA. The HJ becomes 2-fold symmetrical on binding to RuvC with unstacked arms; it has a different conformation from HJ DNA in complex with RuvA. In the full resolvosome a probable DNA-RuvA(4)-RuvB(12)-RuvC(2) complex forms which resolves the HJ. The cofactor is Mg(2+).

The protein resides in the cytoplasm. It carries out the reaction Endonucleolytic cleavage at a junction such as a reciprocal single-stranded crossover between two homologous DNA duplexes (Holliday junction).. Functionally, the RuvA-RuvB-RuvC complex processes Holliday junction (HJ) DNA during genetic recombination and DNA repair. Endonuclease that resolves HJ intermediates. Cleaves cruciform DNA by making single-stranded nicks across the HJ at symmetrical positions within the homologous arms, yielding a 5'-phosphate and a 3'-hydroxyl group; requires a central core of homology in the junction. The consensus cleavage sequence is 5'-(A/T)TT(C/G)-3'. Cleavage occurs on the 3'-side of the TT dinucleotide at the point of strand exchange. HJ branch migration catalyzed by RuvA-RuvB allows RuvC to scan DNA until it finds its consensus sequence, where it cleaves and resolves the cruciform DNA. The protein is Crossover junction endodeoxyribonuclease RuvC of Helicobacter acinonychis (strain Sheeba).